The chain runs to 556 residues: Glucose-6-phosphate isomerase (556 aa).

Glutamate 363 acts as the Proton donor in catalysis. Active-site residues include histidine 394 and lysine 522.

It belongs to the GPI family.

It is found in the cytoplasm. The catalysed reaction is alpha-D-glucose 6-phosphate = beta-D-fructose 6-phosphate. It functions in the pathway carbohydrate biosynthesis; gluconeogenesis. It participates in carbohydrate degradation; glycolysis; D-glyceraldehyde 3-phosphate and glycerone phosphate from D-glucose: step 2/4. Its function is as follows. Catalyzes the reversible isomerization of glucose-6-phosphate to fructose-6-phosphate. In Frankia casuarinae (strain DSM 45818 / CECT 9043 / HFP020203 / CcI3), this protein is Glucose-6-phosphate isomerase.